A 363-amino-acid chain; its full sequence is Histidinol-phosphate aminotransferase (363 aa).

Position 220 is an N6-(pyridoxal phosphate)lysine (K220).

This sequence belongs to the class-II pyridoxal-phosphate-dependent aminotransferase family. Histidinol-phosphate aminotransferase subfamily. In terms of assembly, homodimer. Pyridoxal 5'-phosphate is required as a cofactor.

The enzyme catalyses L-histidinol phosphate + 2-oxoglutarate = 3-(imidazol-4-yl)-2-oxopropyl phosphate + L-glutamate. It participates in amino-acid biosynthesis; L-histidine biosynthesis; L-histidine from 5-phospho-alpha-D-ribose 1-diphosphate: step 7/9. The polypeptide is Histidinol-phosphate aminotransferase (Chlorobium chlorochromatii (strain CaD3)).